The primary structure comprises 467 residues: Glutamate--tRNA ligase (467 aa).

The 'HIGH' region motif lies at 15 to 25 (PSPTGYLHVGG). Residues 249-253 (KLSKR) carry the 'KMSKS' region motif. K252 lines the ATP pocket.

Belongs to the class-I aminoacyl-tRNA synthetase family. Glutamate--tRNA ligase type 1 subfamily. In terms of assembly, monomer.

It is found in the cytoplasm. It catalyses the reaction tRNA(Glu) + L-glutamate + ATP = L-glutamyl-tRNA(Glu) + AMP + diphosphate. Functionally, catalyzes the attachment of glutamate to tRNA(Glu) in a two-step reaction: glutamate is first activated by ATP to form Glu-AMP and then transferred to the acceptor end of tRNA(Glu). This Coprothermobacter proteolyticus (strain ATCC 35245 / DSM 5265 / OCM 4 / BT) protein is Glutamate--tRNA ligase.